Consider the following 640-residue polypeptide: Threonine--tRNA ligase (640 aa).

In terms of domain architecture, TGS spans 1–61 (MPVITLPDGS…SNDATLQIIT (61 aa)). Residues 242 to 533 (DHRKIGKQLD…LIEHYAGVFP (292 aa)) are catalytic. Zn(2+) contacts are provided by Cys333, His384, and His510.

It belongs to the class-II aminoacyl-tRNA synthetase family. Homodimer. The cofactor is Zn(2+).

The protein resides in the cytoplasm. It catalyses the reaction tRNA(Thr) + L-threonine + ATP = L-threonyl-tRNA(Thr) + AMP + diphosphate + H(+). Functionally, catalyzes the attachment of threonine to tRNA(Thr) in a two-step reaction: L-threonine is first activated by ATP to form Thr-AMP and then transferred to the acceptor end of tRNA(Thr). Also edits incorrectly charged L-seryl-tRNA(Thr). This chain is Threonine--tRNA ligase, found in Pseudomonas putida (strain ATCC 47054 / DSM 6125 / CFBP 8728 / NCIMB 11950 / KT2440).